A 413-amino-acid polypeptide reads, in one-letter code: FAD-dependent monooxygenase vrtH (413 aa).

The signal sequence occupies residues 1–23; it reads MQRANHTRPVLIIGAGLSGLAIG. N-linked (GlcNAc...) asparagine glycosylation is present at Asn5. The FAD site is built by Glu37 and Ala48. Asn94 carries N-linked (GlcNAc...) asparagine glycosylation. Arg120 contacts FAD. N-linked (GlcNAc...) asparagine glycosylation occurs at Asn232. 2 residues coordinate FAD: Asp327 and Gly340.

It belongs to the paxM FAD-dependent monooxygenase family. FAD serves as cofactor.

The protein operates within secondary metabolite biosynthesis; terpenoid biosynthesis. Functionally, FAD-dependent monooxygenase; part of the gene cluster that mediates the biosynthesis of viridicatumtoxin, a tetracycline-like fungal meroterpenoid with a unique, fused spirobicyclic ring system. The first step of the pathway is the production of the malonamoyl-CoA starter unit for the polyketide synthase vrtA. The aldolase vrtJ may be involved in the synthesis of the malonamate substrate for malonamoyl-CoA synthetase vrtB. The polyketide synthase vrtA then may utilize the malonamoyl-CoA starter unit, followed by sequential condensation of eight malonyl-CoA units to form the polyketide backbone. The cyclization of the last ring could be mediated by the lactamase-like protein vrtG. The proposed post-PKS tailoring steps are a hydroxylation at C5 catalyzed the cytochrome P450 monooxygenase vrtE, a hydroxylation at C12a catalyzed by VrtH and/or VrtI, and an O-methylation by the O-methyltransferase vrtF. VrtC is then proposed to catalyze the transfer of a geranyl group synthesized by vrtD to the aromatic C ring of the tetracyclic polyketide intermediate of viridicatumtoxin to yield previridicatumtoxin. Finally, the cytochrome P450 monooxygenase vrtK catalyzes the spirocyclization of the geranyl moiety of previridicatumtoxin to afford viridicatumtoxin. In Penicillium aethiopicum, this protein is FAD-dependent monooxygenase vrtH.